A 1929-amino-acid chain; its full sequence is Myoferlin (1929 aa).

Positions 1 to 53 (MISYEPPPSAISNPTDPGGTTIIQGDGENDEEEDRDIVDAGFNPSVPGAPGQT) are disordered. Residues 27–36 (GENDEEEDRD) show a composition bias toward acidic residues. C2 domains lie at 62-179 (VKGK…RKWV) and 218-354 (EDDD…EEYD). Asp267, Asp275, Asp323, Asp325, and Asp331 together coordinate Ca(2+). Residues 898 to 907 (RRLVRKRKKD) show a composition bias toward basic residues. The segment at 898–918 (RRLVRKRKKDPKVSTTSKAAL) is disordered. C2 domains are found at residues 996-1124 (GANT…LLWY), 1159-1283 (RAPQ…TKHE), 1408-1527 (IPYP…SHCG), and 1645-1793 (GPPG…EKCS). Asp1028, Asp1034, Asp1090, and Asp1092 together coordinate Ca(2+). Residues Asp1442, Asp1448, Asp1497, Asp1499, Asp1764, Ser1767, and Asp1770 each coordinate Ca(2+). The span at 1845–1858 (DAEERPAGKGRDEP) shows a compositional bias: basic and acidic residues. The interval 1845–1867 (DAEERPAGKGRDEPNMNPKLDPP) is disordered. The chain crosses the membrane as a helical span at residues 1894-1914 (WVFIGLIILLLVLLFLGVFFY).

Belongs to the ferlin family. Ca(2+) serves as cofactor.

The protein resides in the cell membrane. It localises to the nucleus membrane. The protein localises to the cytoplasmic vesicle membrane. Its function is as follows. May play a role in membrane regeneration and repair. This is Myoferlin (myof) from Xenopus tropicalis (Western clawed frog).